The sequence spans 48 residues: Photosystem II reaction center protein K (48 aa).

The propeptide occupies 1-11 (MFLFNLEQSIG). A helical membrane pass occupies residues 23–43 (LVDVLPIIPLLFLLLAFVWQA).

This sequence belongs to the PsbK family. In terms of assembly, PSII is composed of 1 copy each of membrane proteins PsbA, PsbB, PsbC, PsbD, PsbE, PsbF, PsbH, PsbI, PsbJ, PsbK, PsbL, PsbM, PsbT, PsbX, PsbY, PsbZ, Psb30/Ycf12, at least 3 peripheral proteins of the oxygen-evolving complex and a large number of cofactors. It forms dimeric complexes.

The protein resides in the plastid. It localises to the chloroplast thylakoid membrane. One of the components of the core complex of photosystem II (PSII). PSII is a light-driven water:plastoquinone oxidoreductase that uses light energy to abstract electrons from H(2)O, generating O(2) and a proton gradient subsequently used for ATP formation. It consists of a core antenna complex that captures photons, and an electron transfer chain that converts photonic excitation into a charge separation. This Lepocinclis buetschlii protein is Photosystem II reaction center protein K.